We begin with the raw amino-acid sequence, 251 residues long: MVDDSQDTTHFGFQTVAKAQKADMVAHVFHSVAAKYDVMNDLMSFGIHRLWKRFTIDCSGVRRGQTVLDLAGGTGDLTAKFSRMVGDTGRVVLADINDSMLKMGREKLRNIGVVGNVEYVQANAEALPFPDNTFDCITISFGLRNVTDKEKALRSMYRVLKPGGRLLVLEFSKPIIEPLSKAYDAYSFHVLPRIGEMVANDGESYRYLAESIRMHPDQDTLKAMMQDAGLENVEYFNLTAGVVALHRGYKF.

S-adenosyl-L-methionine is bound by residues Thr74, Asp95, 123–124 (NA), and Ser140.

The protein belongs to the class I-like SAM-binding methyltransferase superfamily. MenG/UbiE family.

It carries out the reaction a 2-demethylmenaquinol + S-adenosyl-L-methionine = a menaquinol + S-adenosyl-L-homocysteine + H(+). The enzyme catalyses a 2-methoxy-6-(all-trans-polyprenyl)benzene-1,4-diol + S-adenosyl-L-methionine = a 5-methoxy-2-methyl-3-(all-trans-polyprenyl)benzene-1,4-diol + S-adenosyl-L-homocysteine + H(+). Its pathway is quinol/quinone metabolism; menaquinone biosynthesis; menaquinol from 1,4-dihydroxy-2-naphthoate: step 2/2. The protein operates within cofactor biosynthesis; ubiquinone biosynthesis. In terms of biological role, methyltransferase required for the conversion of demethylmenaquinol (DMKH2) to menaquinol (MKH2) and the conversion of 2-polyprenyl-6-methoxy-1,4-benzoquinol (DDMQH2) to 2-polyprenyl-3-methyl-6-methoxy-1,4-benzoquinol (DMQH2). This Enterobacter sp. (strain 638) protein is Ubiquinone/menaquinone biosynthesis C-methyltransferase UbiE.